Reading from the N-terminus, the 369-residue chain is UPF0283 membrane protein RPA1583 (369 aa).

A disordered region spans residues 1 to 61; the sequence is MTERVPPRRP…APPPPPPRAR (61 aa). Positions 34–51 are enriched in low complexity; it reads AKPSAKADARPAASAAGA. 3 helical membrane passes run 90 to 110, 124 to 144, and 239 to 259; these read WGTVFWSAATGLVSLAFWLWI, LGTIGMVLALLAGGSLAIIIG, and VSLVTAISPKALIDVLFVAIA.

The protein belongs to the UPF0283 family.

It localises to the cell inner membrane. This chain is UPF0283 membrane protein RPA1583, found in Rhodopseudomonas palustris (strain ATCC BAA-98 / CGA009).